A 553-amino-acid polypeptide reads, in one-letter code: Peroxiredoxin-2A (553 aa).

One can recognise a Thioredoxin domain in the interval Ile4–Ser160. Cys51 acts as the Cysteine sulfenic acid (-SOH) intermediate in catalysis. One can recognise an F-box domain in the interval Thr156 to Met201.

This sequence belongs to the peroxiredoxin family. Prx5 subfamily. In terms of assembly, monomer.

The catalysed reaction is [glutaredoxin]-dithiol + a hydroperoxide = [glutaredoxin]-disulfide + an alcohol + H2O. Its function is as follows. Thiol-specific peroxidase that catalyzes the reduction of hydrogen peroxide and organic hydroperoxides to water and alcohols, respectively. Plays a role in cell protection against oxidative stress by detoxifying peroxides. May be involved in intracellular redox signaling. In Arabidopsis thaliana (Mouse-ear cress), this protein is Peroxiredoxin-2A (PRXIIA).